A 397-amino-acid chain; its full sequence is MNVIRFSDLCAQGQVSGKRVFIRADLNVPQDDAGHITEDTRIRASIPCIQMALDAGAAVMVTSHLGRPTEGAFKPEDSLAPVAQRLAELMGRAVPLIANWVDGVSVQPGQLVLLENCRVNPGEKKNNEALARKMAALCDIFVHDAFGTAHRAEASTYGIAQFAKVACAGPLLAAEMDAISKALANPKRPLVAIVAGSKVSTKLTILKSLASKVDQLIVGGGIANTFMLAAGLKIGKSLAEPDLLEDARAVIAAMKARGAAVPIPTDVVTAKTFAADAVATVKAATDVADDDLILDIGPQTAAALATQLKAAGTIVWNGPVGVFEFPAFENGTQTIAHAIAESSAFSIAGGGDTLAAIAKYGIEKQIGYISTGGGAFLEVLEGKTLPAFEILTRRAAG.

Substrate-binding positions include 25-27 (DLN), Arg-41, 64-67 (HLGR), Arg-118, and Arg-151. ATP is bound by residues Lys-202, Glu-324, and 350–353 (GGDT).

The protein belongs to the phosphoglycerate kinase family. Monomer.

The protein resides in the cytoplasm. It catalyses the reaction (2R)-3-phosphoglycerate + ATP = (2R)-3-phospho-glyceroyl phosphate + ADP. It participates in carbohydrate degradation; glycolysis; pyruvate from D-glyceraldehyde 3-phosphate: step 2/5. This Albidiferax ferrireducens (strain ATCC BAA-621 / DSM 15236 / T118) (Rhodoferax ferrireducens) protein is Phosphoglycerate kinase.